We begin with the raw amino-acid sequence, 408 residues long: LL-diaminopimelate aminotransferase (408 aa).

2 residues coordinate substrate: Tyr-15 and Gly-42. Pyridoxal 5'-phosphate is bound by residues Tyr-72, 108-109 (SK), Tyr-132, Asn-187, Tyr-218, and 246-248 (SFS). Residues Lys-109, Tyr-132, and Asn-187 each coordinate substrate. The residue at position 249 (Lys-249) is an N6-(pyridoxal phosphate)lysine. Residues Arg-257 and Asn-292 each contribute to the pyridoxal 5'-phosphate site. The substrate site is built by Asn-292 and Arg-388.

This sequence belongs to the class-I pyridoxal-phosphate-dependent aminotransferase family. LL-diaminopimelate aminotransferase subfamily. In terms of assembly, homodimer. Pyridoxal 5'-phosphate is required as a cofactor.

The catalysed reaction is (2S,6S)-2,6-diaminopimelate + 2-oxoglutarate = (S)-2,3,4,5-tetrahydrodipicolinate + L-glutamate + H2O + H(+). It functions in the pathway amino-acid biosynthesis; L-lysine biosynthesis via DAP pathway; LL-2,6-diaminopimelate from (S)-tetrahydrodipicolinate (aminotransferase route): step 1/1. Its function is as follows. Involved in the synthesis of meso-diaminopimelate (m-DAP or DL-DAP), required for both lysine and peptidoglycan biosynthesis. Catalyzes the direct conversion of tetrahydrodipicolinate to LL-diaminopimelate. This chain is LL-diaminopimelate aminotransferase, found in Prochlorococcus marinus (strain MIT 9515).